The sequence spans 262 residues: LOB domain-containing protein 18 (262 aa).

The 103-residue stretch at 36–138 folds into the LOB domain; it reads GPCGACKFLR…AEVSYLQAHL (103 aa). Residues 223–262 form a disordered region; that stretch reads VGLGGENSHDLQALAHELLHRQGSPPPAATDHSPSRTMSR.

The protein belongs to the LOB domain-containing protein family. As to quaternary structure, homodimer and heterodimer with LBD16. Interacts with GIP1. As to expression, expressed in roots, stems, leaves and flowers. Expressed in vascular tissues of hypocotyls, leaves, roots, developing floral organs and siliques.

The protein resides in the nucleus. Functionally, involved in the positive regulation of tracheary element (TE) differentiation. Involved in a positive feedback loop that maintains or promotes NAC030/VND7 expression that regulates TE differentiation-related genes. Functions in the initiation and emergence of lateral roots, in conjunction with LBD16, downstream of ARF7 and ARF19. Transcriptional activator that directly regulates EXPA14, a gene encoding a cell wall-loosening factor that promotes lateral root emergence. Activates EXPA14 by directly binding to a specific region of its promoter. Transcriptional activator that directly regulates EXPA17, a gene encoding a cell wall-loosening factor that promotes lateral root emergence. Acts downstream of the auxin influx carriers AUX1 and LAX1 in the regulation of lateral root initiation and development. This is LOB domain-containing protein 18 (LBD18) from Arabidopsis thaliana (Mouse-ear cress).